Here is a 381-residue protein sequence, read N- to C-terminus: 4-hydroxy-3-methylbut-2-en-1-yl diphosphate synthase (flavodoxin) (381 aa).

[4Fe-4S] cluster-binding residues include C280, C283, C315, and E322.

The protein belongs to the IspG family. It depends on [4Fe-4S] cluster as a cofactor.

The catalysed reaction is (2E)-4-hydroxy-3-methylbut-2-enyl diphosphate + oxidized [flavodoxin] + H2O + 2 H(+) = 2-C-methyl-D-erythritol 2,4-cyclic diphosphate + reduced [flavodoxin]. Its pathway is isoprenoid biosynthesis; isopentenyl diphosphate biosynthesis via DXP pathway; isopentenyl diphosphate from 1-deoxy-D-xylulose 5-phosphate: step 5/6. Converts 2C-methyl-D-erythritol 2,4-cyclodiphosphate (ME-2,4cPP) into 1-hydroxy-2-methyl-2-(E)-butenyl 4-diphosphate. The sequence is that of 4-hydroxy-3-methylbut-2-en-1-yl diphosphate synthase (flavodoxin) from Clavibacter michiganensis subsp. michiganensis (strain NCPPB 382).